Here is a 564-residue protein sequence, read N- to C-terminus: R-linalool synthase (564 aa).

Mg(2+) contacts are provided by Asp320, Asp324, Asp464, Thr468, and Glu472. Residues 320–324 carry the DDXXD motif motif; the sequence is DDVYD.

It belongs to the terpene synthase family. The cofactor is Mg(2+). Mn(2+) is required as a cofactor.

The enzyme catalyses (2E)-geranyl diphosphate + H2O = (R)-linalool + diphosphate. Its function is as follows. Specifically catalyzes production of (R)-(-)-linalool, the main component of lavender essential oil. The protein is R-linalool synthase of Lavandula angustifolia (Lavender).